We begin with the raw amino-acid sequence, 217 residues long: TPA-induced transmembrane protein (217 aa).

Positions 1 to 37 (MDLAQPSQPVDELELSVLERQPEENTPLNGADKVFPS) are disordered. Residues 66–86 (LWMIITSIFLGVITVIIIGLC) traverse the membrane as a helical segment.

As to quaternary structure, interacts with LIPH. As to expression, detected predominantly in the skin, with strongest expression in the inner root sheath of the hair follicle.

The protein localises to the endoplasmic reticulum. Its subcellular location is the cell membrane. Its function is as follows. Has a role in LIPH-mediated synthesis of 2-acyl lysophosphatidic acid (LPA). LPA is a bioactive lipid mediator involved in different biological processes, and necessary to promote hair formation and growth. In Homo sapiens (Human), this protein is TPA-induced transmembrane protein (TTMP).